The chain runs to 424 residues: Histidine--tRNA ligase (424 aa).

This sequence belongs to the class-II aminoacyl-tRNA synthetase family. Homodimer.

It is found in the cytoplasm. It catalyses the reaction tRNA(His) + L-histidine + ATP = L-histidyl-tRNA(His) + AMP + diphosphate + H(+). This is Histidine--tRNA ligase from Salmonella agona (strain SL483).